The following is a 417-amino-acid chain: Voltage-gated ClC-type chloride channel ClcB (417 aa).

Transmembrane regions (helical) follow at residues 5-25, 54-74, 146-166, 168-188, 190-210, 222-242, 258-278, 288-308, 316-336, 339-359, and 380-400; these read LLIA…FRHA, LITP…WQKM, LWIA…PLAG, LFIA…PVVI, AVVA…LYTV, AMII…MWLM, WQLA…PAVW, FLLS…KLLA, GAPG…GMLY, MWGF…LTGM, and MTGE…ASVL.

Belongs to the chloride channel (TC 2.A.49) family. ClcB subfamily.

The protein localises to the cell inner membrane. Its function is as follows. Probably acts as an electrical shunt for an outwardly-directed proton pump that is linked to amino acid decarboxylation, as part of the extreme acid resistance (XAR) response. This Citrobacter koseri (strain ATCC BAA-895 / CDC 4225-83 / SGSC4696) protein is Voltage-gated ClC-type chloride channel ClcB.